A 691-amino-acid polypeptide reads, in one-letter code: DNA topoisomerase 1 (691 aa).

One can recognise a Toprim domain in the interval 3–114 (DYLVIVESPA…DCRVVFNEIT (112 aa)). 2 residues coordinate Mg(2+): Glu9 and Asp82. The 430-residue stretch at 129 to 558 (NMDLVDAQQA…NFYTDFEKRV (430 aa)) folds into the Topo IA-type catalytic domain. Positions 163–168 (SAGRVQ) are interaction with DNA. Tyr298 functions as the O-(5'-phospho-DNA)-tyrosine intermediate in the catalytic mechanism. 3 consecutive C4-type zinc fingers follow at residues 579–605 (CELCSSPMVYKMGRYGKFLACSNFPDC), 619–647 (CPSCGEGNIVERKSKKKRVFYGCDRYPDC), and 660–683 (CPKCGKMLVEKKLKKGIQVQCVEC).

This sequence belongs to the type IA topoisomerase family. As to quaternary structure, monomer. Interacts with the RNA polymerase core. The cofactor is Mg(2+).

The catalysed reaction is ATP-independent breakage of single-stranded DNA, followed by passage and rejoining.. In terms of biological role, releases the supercoiling and torsional tension of DNA, which is introduced during the DNA replication and transcription, by transiently cleaving and rejoining one strand of the DNA duplex. Introduces a single-strand break via transesterification at a target site in duplex DNA. The scissile phosphodiester is attacked by the catalytic tyrosine of the enzyme, resulting in the formation of a DNA-(5'-phosphotyrosyl)-enzyme intermediate and the expulsion of a 3'-OH DNA strand. The free DNA strand then undergoes passage around the unbroken strand, thus removing DNA supercoils. Finally, in the religation step, the DNA 3'-OH attacks the covalent intermediate to expel the active-site tyrosine and restore the DNA phosphodiester backbone. The sequence is that of DNA topoisomerase 1 from Bacillus subtilis (strain 168).